The sequence spans 149 residues: Myoglobin (149 aa).

The residue at position 2 (Ala-2) is an N-acetylalanine. One can recognise a Globin domain in the interval 2–143 (ABWDKVNSVW…ICSDIEKEYK (142 aa)). His-89 is a heme b binding site.

Belongs to the globin family. Monomeric.

Its subcellular location is the cytoplasm. It is found in the sarcoplasm. It catalyses the reaction Fe(III)-heme b-[protein] + nitric oxide + H2O = Fe(II)-heme b-[protein] + nitrite + 2 H(+). It carries out the reaction H2O2 + AH2 = A + 2 H2O. In terms of biological role, monomeric heme protein which primary function is to store oxygen and facilitate its diffusion within muscle tissues. Reversibly binds oxygen through a pentacoordinated heme iron and enables its timely and efficient release as needed during periods of heightened demand. Depending on the oxidative conditions of tissues and cells, and in addition to its ability to bind oxygen, it also has a nitrite reductase activity whereby it regulates the production of bioactive nitric oxide. Under stress conditions, like hypoxia and anoxia, it also protects cells against reactive oxygen species thanks to its pseudoperoxidase activity. The protein is Myoglobin (mb) of Hemitriakis japanica (Japanese topeshark).